Consider the following 164-residue polypeptide: Interferon gamma (164 aa).

The signal sequence occupies residues 1-19 (MTCQTYNLFVLSVIMIYYG). Residues Asn-42 and Asn-61 are each glycosylated (N-linked (GlcNAc...) asparagine).

This sequence belongs to the type II (or gamma) interferon family. In terms of assembly, homodimer.

The protein resides in the secreted. Its function is as follows. Produced by lymphocytes activated by specific antigens or mitogens. IFN-gamma, in addition to having antiviral activity, has important immunoregulatory functions. It is a potent activator of macrophages, it has antiproliferative effects on transformed cells and it can potentiate the antiviral and antitumor effects of the type I interferons. This is Interferon gamma (IFNG) from Phasianus colchicus colchicus (Black-necked pheasant).